Here is a 58-residue protein sequence, read N- to C-terminus: Single-pass membrane and coiled-coil domain-containing protein 4 homolog (58 aa).

Residues 1–31 adopt a coiled-coil conformation; sequence MRQLKGKVKETRKQKKERKLDNLETQAKIRT. A helical membrane pass occupies residues 31-51; sequence TVVLPALGVLAVFLVLFVYLK.

This sequence belongs to the SMCO4 family.

It is found in the membrane. This Drosophila melanogaster (Fruit fly) protein is Single-pass membrane and coiled-coil domain-containing protein 4 homolog.